A 696-amino-acid chain; its full sequence is Polyribonucleotide nucleotidyltransferase (696 aa).

Mg(2+) contacts are provided by aspartate 489 and aspartate 495. Residues 556-615 enclose the KH domain; sequence PQYVTMKINPEKIRDVIGKGGVVIREITEATNCAIDISDDGTIKIAAHTTEEGEAAKRRI. In terms of domain architecture, S1 motif spans 625-693; that stretch reads GKVYEGTVVK…RQGRVRLSMK (69 aa).

Belongs to the polyribonucleotide nucleotidyltransferase family. As to quaternary structure, component of the RNA degradosome, which is a multiprotein complex involved in RNA processing and mRNA degradation. Requires Mg(2+) as cofactor.

Its subcellular location is the cytoplasm. The catalysed reaction is RNA(n+1) + phosphate = RNA(n) + a ribonucleoside 5'-diphosphate. Involved in mRNA degradation. Catalyzes the phosphorolysis of single-stranded polyribonucleotides processively in the 3'- to 5'-direction. This is Polyribonucleotide nucleotidyltransferase from Coxiella burnetii (strain RSA 331 / Henzerling II).